A 102-amino-acid chain; its full sequence is uncharacterized protein (102 aa).

This is an uncharacterized protein from Ictaluridae (bullhead catfishes).